The following is a 333-amino-acid chain: DNA-directed RNA polymerase subunit alpha (333 aa).

The segment at 1–235 (MQTNLLKPKA…EQLAVFAQLE (235 aa)) is alpha N-terminal domain (alpha-NTD). The segment at 253–333 (FDPILLRPVD…NWPPQGLDKR (81 aa)) is alpha C-terminal domain (alpha-CTD).

It belongs to the RNA polymerase alpha chain family. As to quaternary structure, homodimer. The RNAP catalytic core consists of 2 alpha, 1 beta, 1 beta' and 1 omega subunit. When a sigma factor is associated with the core the holoenzyme is formed, which can initiate transcription.

The catalysed reaction is RNA(n) + a ribonucleoside 5'-triphosphate = RNA(n+1) + diphosphate. Functionally, DNA-dependent RNA polymerase catalyzes the transcription of DNA into RNA using the four ribonucleoside triphosphates as substrates. This chain is DNA-directed RNA polymerase subunit alpha, found in Methylibium petroleiphilum (strain ATCC BAA-1232 / LMG 22953 / PM1).